A 235-amino-acid polypeptide reads, in one-letter code: Protein C1orf43 homolog (235 aa).

The helical transmembrane segment at 11-31 threads the bilayer; the sequence is VNVVLVMAYGSLVFVLLFIFV.

It localises to the membrane. Its subcellular location is the golgi apparatus. The protein localises to the mitochondrion. General regulator of phagocytosis. Required to uptake Gram negative bacterium by macrophages. This Rattus norvegicus (Rat) protein is Protein C1orf43 homolog.